The sequence spans 314 residues: Olfactory receptor 5F1 (314 aa).

At 1–25 the chain is on the extracellular side; sequence MTRKNYTSLTEFVLLGLADTLELQI. A glycan (N-linked (GlcNAc...) asparagine) is linked at asparagine 5. A helical membrane pass occupies residues 26–46; sequence ILFLFFLVIYTLTVLGNLGMI. The Cytoplasmic portion of the chain corresponds to 47 to 54; it reads LLIRIDSQ. Residues 55-75 form a helical membrane-spanning segment; the sequence is LHTPMYFFLANLSFVDVCNST. The Extracellular portion of the chain corresponds to 76-99; sequence TITPKMLADLLSEKKTISFAGCFL. Cysteine 97 and cysteine 189 are oxidised to a cystine. A helical membrane pass occupies residues 100–120; that stretch reads QMYFFISLATTECILFGLMAY. Over 121 to 139 the chain is Cytoplasmic; sequence DRYAAICRPLLYSLIMSRT. Residues 140-160 traverse the membrane as a helical segment; that stretch reads VYLKMAAGAFAAGLLNFMVNT. Residues 161–196 are Extracellular-facing; sequence SHVSSLSFCDSNVIHHFFCDSPPLFKLSCSDTILKE. Residues 197 to 217 form a helical membrane-spanning segment; sequence SISSILAGVNIVGTLLVILSS. Topologically, residues 218–237 are cytoplasmic; sequence YSYVLFSIFSMHSGEGRHRA. The helical transmembrane segment at 238-258 threads the bilayer; that stretch reads FSTCASHLTAIILFYATCIYT. Residues 259–271 lie on the Extracellular side of the membrane; sequence YLRPSSSYSLNQD. Residues 272 to 292 traverse the membrane as a helical segment; sequence KVASVFYTVVIPMLNPLIYSL. Residues 293 to 314 lie on the Cytoplasmic side of the membrane; it reads RSKEVKKALANVISRKRTSSFL.

Belongs to the G-protein coupled receptor 1 family.

Its subcellular location is the cell membrane. Its function is as follows. Odorant receptor. This chain is Olfactory receptor 5F1 (OR5F1), found in Homo sapiens (Human).